We begin with the raw amino-acid sequence, 235 residues long: Segregation and condensation protein A (235 aa).

The protein belongs to the ScpA family. Component of a cohesin-like complex composed of ScpA, ScpB and the Smc homodimer, in which ScpA and ScpB bind to the head domain of Smc. The presence of the three proteins is required for the association of the complex with DNA.

The protein localises to the cytoplasm. Participates in chromosomal partition during cell division. May act via the formation of a condensin-like complex containing Smc and ScpB that pull DNA away from mid-cell into both cell halves. The polypeptide is Segregation and condensation protein A (Streptococcus agalactiae serotype Ia (strain ATCC 27591 / A909 / CDC SS700)).